The sequence spans 655 residues: Probable replication restart protein PriA (655 aa).

Cysteine 368, cysteine 371, cysteine 377, cysteine 380, cysteine 396, cysteine 399, cysteine 408, and cysteine 411 together coordinate Zn(2+).

Belongs to the helicase family. PriA subfamily. In terms of assembly, component of the replication restart primosome. Zn(2+) serves as cofactor.

Its function is as follows. Initiates the restart of stalled replication forks, which reloads the replicative helicase on sites other than the origin of replication. Recognizes and binds to abandoned replication forks and remodels them to uncover a helicase loading site. Promotes assembly of the primosome at these replication forks. In Mycobacterium bovis (strain ATCC BAA-935 / AF2122/97), this protein is Probable replication restart protein PriA.